The sequence spans 681 residues: UvrABC system protein C (681 aa).

The interval 1–23 (MNGKKLPDGGILFDETDDEDDDA) is disordered. Positions 14–23 (DETDDEDDDA) are enriched in acidic residues. Residues 67–145 (NSPGVYRMFN…IKRLRPRFNV (79 aa)) enclose the GIY-YIG domain. The UVR domain occupies 255 to 290 (QAVKTAIARQMNEASEDLDFERAAIYRDRLAALSHV).

This sequence belongs to the UvrC family. As to quaternary structure, interacts with UvrB in an incision complex.

Its subcellular location is the cytoplasm. Functionally, the UvrABC repair system catalyzes the recognition and processing of DNA lesions. UvrC both incises the 5' and 3' sides of the lesion. The N-terminal half is responsible for the 3' incision and the C-terminal half is responsible for the 5' incision. The sequence is that of UvrABC system protein C from Agrobacterium fabrum (strain C58 / ATCC 33970) (Agrobacterium tumefaciens (strain C58)).